Reading from the N-terminus, the 406-residue chain is Exo-alpha-sialidase (406 aa).

A signal peptide spans 1–20 (MQSMRFMILALLVQFLPAWA). 4 residues coordinate substrate: R59, R78, D84, and Q148. N235 is a glycosylation site (N-linked (GlcNAc...) asparagine). Residues R265, R322, 322-323 (RR), 331-332 (YD), K337, Y358, D376, and 376-378 (DFF) contribute to the substrate site. N-linked (GlcNAc...) asparagine glycosylation is present at N396.

Belongs to the glycosyl hydrolase 33 family.

It catalyses the reaction Hydrolysis of alpha-(2-&gt;3)-, alpha-(2-&gt;6)-, alpha-(2-&gt;8)- glycosidic linkages of terminal sialic acid residues in oligosaccharides, glycoproteins, glycolipids, colominic acid and synthetic substrates.. Functionally, sialidase is able to release sialic acid from a wide variety of natural substrates including bovine salivary mucin, colominic acid, bovine fetuin, a serum glycoprotein containing both alpha-2-6 and alpha-2-3-linkages in a ratio of about 3:2, and glycoproteins and glycolipids from thermally denatured human lung epithelial cells. Does not show any trans-sialidase activity since it is able to remove terminal sialic acid residues but is unable to catalyze their transfer to the acceptor substrate. 2-keto-3-deoxynononic acid (KDN) is the preferred substrate and A.fumigatus can utilize KDN as a sole carbon source. The protein is Exo-alpha-sialidase of Aspergillus fumigatus (strain ATCC MYA-4609 / CBS 101355 / FGSC A1100 / Af293) (Neosartorya fumigata).